The following is a 352-amino-acid chain: Quinolinate synthase (352 aa).

2 residues coordinate iminosuccinate: H48 and S69. Residue C114 participates in [4Fe-4S] cluster binding. Residues 140-142 (YAN) and S157 contribute to the iminosuccinate site. C201 contacts [4Fe-4S] cluster. Iminosuccinate is bound by residues 227–229 (HPE) and T244. Residue C298 coordinates [4Fe-4S] cluster.

This sequence belongs to the quinolinate synthase family. Type 1 subfamily. Requires [4Fe-4S] cluster as cofactor.

Its subcellular location is the cytoplasm. It catalyses the reaction iminosuccinate + dihydroxyacetone phosphate = quinolinate + phosphate + 2 H2O + H(+). It participates in cofactor biosynthesis; NAD(+) biosynthesis; quinolinate from iminoaspartate: step 1/1. Its function is as follows. Catalyzes the condensation of iminoaspartate with dihydroxyacetone phosphate to form quinolinate. This Pseudomonas putida (strain GB-1) protein is Quinolinate synthase.